Here is a 129-residue protein sequence, read N- to C-terminus: UPF0325 protein SG1947 (129 aa).

Belongs to the UPF0325 family.

The polypeptide is UPF0325 protein SG1947 (Sodalis glossinidius (strain morsitans)).